Consider the following 338-residue polypeptide: NADPH dehydrogenase (338 aa).

22 to 25 (SPMC) provides a ligand contact to FMN. Substrate is bound at residue Tyr-27. Residues Ala-59 and Gln-101 each contribute to the FMN site. Residue 163–166 (HAAH) coordinates substrate. FMN-binding positions include Arg-214 and 306 to 307 (GR).

It belongs to the NADH:flavin oxidoreductase/NADH oxidase family. NamA subfamily. In terms of assembly, homotetramer. FMN is required as a cofactor.

The enzyme catalyses A + NADPH + H(+) = AH2 + NADP(+). In terms of biological role, catalyzes the reduction of the double bond of an array of alpha,beta-unsaturated aldehydes and ketones. It also reduces the nitro group of nitroester and nitroaromatic compounds. It could have a role in detoxification processes. In Listeria monocytogenes serotype 4a (strain HCC23), this protein is NADPH dehydrogenase.